Here is a 179-residue protein sequence, read N- to C-terminus: Isopentenyl-diphosphate Delta-isomerase (179 aa).

Residues His-24 and His-30 each contribute to the Mn(2+) site. In terms of domain architecture, Nudix hydrolase spans 28 to 160 (LLHRAFSIFI…PEKFTVWFLT (133 aa)). Cys-65 is an active-site residue. His-67 provides a ligand contact to Mn(2+). A Mg(2+)-binding site is contributed by Glu-85. Glu-110 and Glu-112 together coordinate Mn(2+). Glu-112 is a catalytic residue.

It belongs to the IPP isomerase type 1 family. As to quaternary structure, homodimer. Mg(2+) serves as cofactor. Requires Mn(2+) as cofactor.

The protein resides in the cytoplasm. It catalyses the reaction isopentenyl diphosphate = dimethylallyl diphosphate. It functions in the pathway isoprenoid biosynthesis; dimethylallyl diphosphate biosynthesis; dimethylallyl diphosphate from isopentenyl diphosphate: step 1/1. Catalyzes the 1,3-allylic rearrangement of the homoallylic substrate isopentenyl (IPP) to its highly electrophilic allylic isomer, dimethylallyl diphosphate (DMAPP). The polypeptide is Isopentenyl-diphosphate Delta-isomerase (Serratia proteamaculans (strain 568)).